A 351-amino-acid polypeptide reads, in one-letter code: MYGFEALTFNIHGGYLEAIVRGHRAGLLTTADYNNLCQCENLDDIKMHLSATKYGSYLQNEPSPLHTTTIVEKCTLKLVDDYKHMLCQATEPMSTFLEYIRYGHMIDNVVLIVTGTLHERDVQELIEKCHPLGMFDSIATLAVAQNMRELYRLVLVDTPLAPYFSECLTSEDLDDMNIEIMRNTLYKAYLEDFYKFCQKLGGATAEIMSDLLAFEADRRAVNITINSIGTELTREDRKKLYSNFGLLYPYGHEELAICEDIDQVRGVMEKYPPYQAIFSKMSYGESQMLDKAFYEEEVRRLCLAFEQQFHYAVFFAYMRLREQEIRNLMWISECVAQNQKSRIHDSVVYMF.

Belongs to the V-ATPase V0D/AC39 subunit family. In terms of assembly, V-ATPase is a heteromultimeric enzyme composed of a peripheral catalytic V1 complex (components A to H) attached to an integral membrane V0 proton pore complex (components: a, c, c'', d and e).

It is found in the vacuole membrane. In terms of biological role, subunit of the integral membrane V0 complex of vacuolar ATPase. Vacuolar ATPase is responsible for acidifying a variety of intracellular compartments in eukaryotic cells, thus providing most of the energy required for transport processes in the vacuolar system. In Arabidopsis thaliana (Mouse-ear cress), this protein is V-type proton ATPase subunit d1 (VHA-d1).